The sequence spans 805 residues: Nitrite reductase [NAD(P)H] (805 aa).

43–79 (YNRILLSKVLQGDTDIKDITLNDWDWYEENNIQLYTN) contacts FAD. 193 to 223 (LQNELEKQGMTFLLEKQTEEIVGDDRVEGLR) serves as a coordination point for NADP(+). [2Fe-2S] cluster contacts are provided by C418, C420, C453, and C456. [4Fe-4S] cluster-binding residues include C635, C641, C675, and C679. C679 is a siroheme binding site.

Belongs to the nitrite and sulfite reductase 4Fe-4S domain family. In terms of assembly, homodimer. It depends on siroheme as a cofactor. The cofactor is [2Fe-2S] cluster. Requires [4Fe-4S] cluster as cofactor. FAD is required as a cofactor.

It catalyses the reaction NH4(+) + 3 NADP(+) + 2 H2O = nitrite + 3 NADPH + 5 H(+). It carries out the reaction NH4(+) + 3 NAD(+) + 2 H2O = nitrite + 3 NADH + 5 H(+). Its pathway is nitrogen metabolism; nitrate reduction (assimilation). Required for nitrite assimilation. The protein is Nitrite reductase [NAD(P)H] (nasD) of Bacillus subtilis (strain 168).